The sequence spans 96 residues: Signal recognition particle 19 kDa protein (96 aa).

It belongs to the SRP19 family. Part of the signal recognition particle protein translocation system, which is composed of SRP and FtsY. Archaeal SRP consists of a 7S RNA molecule of 300 nucleotides and two protein subunits: SRP54 and SRP19.

The protein localises to the cytoplasm. Its function is as follows. Involved in targeting and insertion of nascent membrane proteins into the cytoplasmic membrane. Binds directly to 7S RNA and mediates binding of the 54 kDa subunit of the SRP. The protein is Signal recognition particle 19 kDa protein of Pyrobaculum arsenaticum (strain DSM 13514 / JCM 11321 / PZ6).